Reading from the N-terminus, the 122-residue chain is Large ribosomal subunit protein uL14c (122 aa).

The protein belongs to the universal ribosomal protein uL14 family. As to quaternary structure, part of the 50S ribosomal subunit.

The protein localises to the plastid. It localises to the cyanelle. Its function is as follows. Binds to 23S rRNA. The sequence is that of Large ribosomal subunit protein uL14c from Cyanophora paradoxa.